Reading from the N-terminus, the 530-residue chain is GMP synthase [glutamine-hydrolyzing] (530 aa).

The 202-residue stretch at 4–205 folds into the Glutamine amidotransferase type-1 domain; it reads RILILDYGSQ…VREICGCEGD (202 aa). The active-site Nucleophile is Cys84. Residues His179 and Glu181 contribute to the active site. Positions 206 to 398 constitute a GMPS ATP-PPase domain; sequence WNMPDYISEA…LGLPPQMVYR (193 aa). 233 to 239 is a binding site for ATP; it reads SGGVDSS.

Homodimer.

It carries out the reaction XMP + L-glutamine + ATP + H2O = GMP + L-glutamate + AMP + diphosphate + 2 H(+). The protein operates within purine metabolism; GMP biosynthesis; GMP from XMP (L-Gln route): step 1/1. Its function is as follows. Catalyzes the synthesis of GMP from XMP. The sequence is that of GMP synthase [glutamine-hydrolyzing] from Bordetella avium (strain 197N).